The sequence spans 129 residues: Small ribosomal subunit protein eS6 (129 aa).

Belongs to the eukaryotic ribosomal protein eS6 family.

The protein is Small ribosomal subunit protein eS6 of Methanocorpusculum labreanum (strain ATCC 43576 / DSM 4855 / Z).